Consider the following 204-residue polypeptide: MRKMSKRQQEILDYIVAQVKLKGYPPSVREIGEAVGLASSSTVHGHLDRLEKRGLIRRDPTKPRAIEILLDKPEEDHEAIVHIPVIGKVTAGFPITAIENIEEHFPLPAHYVGNENVFMLTIDGESMINAGILDGDRVIVRQQNTAENGEIVVAMTEDSEATVKRFFLEDQQVRLQPENDSMDPMYFDNVSILGKVIGVYRTIH.

Residues 28 to 48 (VREIGEAVGLASSSTVHGHLD) constitute a DNA-binding region (H-T-H motif). Catalysis depends on for autocatalytic cleavage activity residues S126 and K164.

It belongs to the peptidase S24 family. As to quaternary structure, homodimer.

It carries out the reaction Hydrolysis of Ala-|-Gly bond in repressor LexA.. In terms of biological role, represses a number of genes involved in the response to DNA damage (SOS response), including recA and lexA. In the presence of single-stranded DNA, RecA interacts with LexA causing an autocatalytic cleavage which disrupts the DNA-binding part of LexA, leading to derepression of the SOS regulon and eventually DNA repair. This is LexA repressor from Exiguobacterium sibiricum (strain DSM 17290 / CCUG 55495 / CIP 109462 / JCM 13490 / 255-15).